Reading from the N-terminus, the 639-residue chain is Threonine--tRNA ligase (639 aa).

Residues 1–61 (MIRITLPDNS…DHDARLQIIT (61 aa)) enclose the TGS domain. The interval 242–533 (DHRRLGRELD…LIEQHAGALP (292 aa)) is catalytic. Residues cysteine 333, histidine 384, and histidine 510 each contribute to the Zn(2+) site.

Belongs to the class-II aminoacyl-tRNA synthetase family. Homodimer. It depends on Zn(2+) as a cofactor.

The protein resides in the cytoplasm. The enzyme catalyses tRNA(Thr) + L-threonine + ATP = L-threonyl-tRNA(Thr) + AMP + diphosphate + H(+). In terms of biological role, catalyzes the attachment of threonine to tRNA(Thr) in a two-step reaction: L-threonine is first activated by ATP to form Thr-AMP and then transferred to the acceptor end of tRNA(Thr). Also edits incorrectly charged L-seryl-tRNA(Thr). The polypeptide is Threonine--tRNA ligase (Paracidovorax citrulli (strain AAC00-1) (Acidovorax citrulli)).